The sequence spans 368 residues: Protein PXR1 (368 aa).

Residues 1 to 24 (MGLAGAKNKRKLGNDPNNTKWSRN) form a disordered region. A compositionally biased stretch (polar residues) spans 15 to 24 (DPNNTKWSRN). One can recognise a G-patch domain in the interval 25–79 (TDTFGQKILRAQGWQPGEYLGAKDAAHAEWHTEANTTHIRVTLKDDTLGLGAKRN). The interval 144-337 (TPDEEAEEIP…GYSTPIPTGS (194 aa)) is disordered. The segment covering 176 to 186 (RRSDKEDDKLG) has biased composition (basic and acidic residues). Composition is skewed to basic residues over residues 187 to 196 (KKEKKSKKRK) and 257 to 277 (DKKR…KKEK). Residues 310–337 (PSSAPTPTDSNSSTPTGSGYSTPIPTGS) show a composition bias toward low complexity.

The protein belongs to the PINX1 family.

It localises to the nucleus. Its subcellular location is the nucleolus. Functionally, involved in rRNA-processing at A0, A1 and A2 sites and negatively regulates telomerase. In Chaetomium globosum (strain ATCC 6205 / CBS 148.51 / DSM 1962 / NBRC 6347 / NRRL 1970) (Soil fungus), this protein is Protein PXR1 (PXR1).